A 618-amino-acid polypeptide reads, in one-letter code: UvrABC system protein C (618 aa).

One can recognise a GIY-YIG domain in the interval 19 to 97; sequence SEPGIYRMLD…IKALRPKYNV (79 aa). The region spanning 208 to 243 is the UVR domain; the sequence is QIILDALAERMKQAVNQLNFEEAAVLRDQIKNLRLI.

It belongs to the UvrC family. Interacts with UvrB in an incision complex.

The protein localises to the cytoplasm. Functionally, the UvrABC repair system catalyzes the recognition and processing of DNA lesions. UvrC both incises the 5' and 3' sides of the lesion. The N-terminal half is responsible for the 3' incision and the C-terminal half is responsible for the 5' incision. This chain is UvrABC system protein C, found in Legionella pneumophila (strain Paris).